The chain runs to 299 residues: GTP cyclohydrolase FolE2 (299 aa).

Belongs to the GTP cyclohydrolase IV family.

It carries out the reaction GTP + H2O = 7,8-dihydroneopterin 3'-triphosphate + formate + H(+). It participates in cofactor biosynthesis; 7,8-dihydroneopterin triphosphate biosynthesis; 7,8-dihydroneopterin triphosphate from GTP: step 1/1. Converts GTP to 7,8-dihydroneopterin triphosphate. The sequence is that of GTP cyclohydrolase FolE2 from Citrobacter koseri (strain ATCC BAA-895 / CDC 4225-83 / SGSC4696).